We begin with the raw amino-acid sequence, 185 residues long: UPF0397 protein CPF_1836 (185 aa).

5 consecutive transmembrane segments (helical) span residues 11-31, 44-64, 71-91, 111-131, and 149-169; these read IVAIGIGSAVFMILGRFGSLP, AFLALMALLYGPLAGFLIGFI, IVFFGSPWISWVFASGIVGLI, IFMFNLIQIIANGVAWFLVAP, and GVIGGISNMVTVGVLGTILIA.

This sequence belongs to the UPF0397 family.

The protein resides in the cell membrane. The chain is UPF0397 protein CPF_1836 from Clostridium perfringens (strain ATCC 13124 / DSM 756 / JCM 1290 / NCIMB 6125 / NCTC 8237 / Type A).